Here is a 135-residue protein sequence, read N- to C-terminus: RxLR effector protein Avh5 (135 aa).

The first 19 residues, 1–19, serve as a signal peptide directing secretion; the sequence is MRLQFFLVMAVATLATISA. The RxLR-dEER motif lies at 43 to 71; it reads RFLRTADTDIVYEPKVHNPGKKQVFIEDK. Positions 81, 83, and 84 each coordinate a 1,2-diacyl-sn-glycero-3-phospho-(1D-myo-inositol-3-phosphate).

This sequence belongs to the RxLR effector family.

It localises to the secreted. The protein resides in the host cell. In terms of biological role, effector that suppresses plant defense responses during the early stages of pathogen infection. Suppresses cell death induced by effectors and PAMPs in plant hosts. The sequence is that of RxLR effector protein Avh5 from Phytophthora sojae (Soybean stem and root rot agent).